Reading from the N-terminus, the 283-residue chain is Release factor glutamine methyltransferase (283 aa).

Residues 120–124, Asp143, Phe172, and Asn187 each bind S-adenosyl-L-methionine; that span reads GTGSG. 187-190 provides a ligand contact to substrate; sequence NPPY.

It belongs to the protein N5-glutamine methyltransferase family. PrmC subfamily.

It catalyses the reaction L-glutaminyl-[peptide chain release factor] + S-adenosyl-L-methionine = N(5)-methyl-L-glutaminyl-[peptide chain release factor] + S-adenosyl-L-homocysteine + H(+). Methylates the class 1 translation termination release factors RF1/PrfA and RF2/PrfB on the glutamine residue of the universally conserved GGQ motif. This Moorella thermoacetica (strain ATCC 39073 / JCM 9320) protein is Release factor glutamine methyltransferase.